An 899-amino-acid chain; its full sequence is Alanine--tRNA ligase (899 aa).

Zn(2+) is bound by residues His-595, His-599, Cys-703, and His-707.

The protein belongs to the class-II aminoacyl-tRNA synthetase family. Requires Zn(2+) as cofactor.

Its subcellular location is the cytoplasm. The catalysed reaction is tRNA(Ala) + L-alanine + ATP = L-alanyl-tRNA(Ala) + AMP + diphosphate. Catalyzes the attachment of alanine to tRNA(Ala) in a two-step reaction: alanine is first activated by ATP to form Ala-AMP and then transferred to the acceptor end of tRNA(Ala). Also edits incorrectly charged Ser-tRNA(Ala) and Gly-tRNA(Ala) via its editing domain. The chain is Alanine--tRNA ligase from Caldivirga maquilingensis (strain ATCC 700844 / DSM 13496 / JCM 10307 / IC-167).